The primary structure comprises 384 residues: N-acetyldiaminopimelate deacetylase (384 aa).

The active site involves Asp74. Glu133 (proton acceptor) is an active-site residue.

Belongs to the peptidase M20A family. N-acetyldiaminopimelate deacetylase subfamily.

It catalyses the reaction N-acetyl-(2S,6S)-2,6-diaminopimelate + H2O = (2S,6S)-2,6-diaminopimelate + acetate. It participates in amino-acid biosynthesis; L-lysine biosynthesis via DAP pathway; LL-2,6-diaminopimelate from (S)-tetrahydrodipicolinate (acetylase route): step 3/3. Catalyzes the conversion of N-acetyl-diaminopimelate to diaminopimelate and acetate. This chain is N-acetyldiaminopimelate deacetylase, found in Leuconostoc mesenteroides subsp. mesenteroides (strain ATCC 8293 / DSM 20343 / BCRC 11652 / CCM 1803 / JCM 6124 / NCDO 523 / NBRC 100496 / NCIMB 8023 / NCTC 12954 / NRRL B-1118 / 37Y).